The sequence spans 265 residues: Undecaprenyl-diphosphatase (265 aa).

8 helical membrane-spanning segments follow: residues 1 to 21, 39 to 61, 85 to 105, 115 to 135, 149 to 169, 187 to 207, 218 to 238, and 244 to 264; these read MDFI…FLPI, QGLA…YFRL, LAWA…MLTE, LIIA…DWAG, ILFI…RSGI, FSFL…ALDL, ALAL…HYFF, and IGML…FYLF.

It belongs to the UppP family.

The protein localises to the cell inner membrane. It carries out the reaction di-trans,octa-cis-undecaprenyl diphosphate + H2O = di-trans,octa-cis-undecaprenyl phosphate + phosphate + H(+). In terms of biological role, catalyzes the dephosphorylation of undecaprenyl diphosphate (UPP). Confers resistance to bacitracin. This chain is Undecaprenyl-diphosphatase, found in Nitrosococcus oceani (strain ATCC 19707 / BCRC 17464 / JCM 30415 / NCIMB 11848 / C-107).